The following is a 178-amino-acid chain: Arginine repressor (178 aa).

The tract at residues 1 to 20 (MTEAQEPEYGGPSVPQTRTA) is disordered.

Belongs to the ArgR family.

Its subcellular location is the cytoplasm. Its pathway is amino-acid biosynthesis; L-arginine biosynthesis [regulation]. Its function is as follows. Regulates arginine biosynthesis genes. The sequence is that of Arginine repressor from Streptomyces griseus subsp. griseus (strain JCM 4626 / CBS 651.72 / NBRC 13350 / KCC S-0626 / ISP 5235).